We begin with the raw amino-acid sequence, 166 residues long: Regulator of ribonuclease activity A (166 aa).

The protein belongs to the RraA family. As to quaternary structure, homotrimer. Binds to both RNA-binding sites in the C-terminal region of Rne and to RhlB.

Its subcellular location is the cytoplasm. Functionally, globally modulates RNA abundance by binding to RNase E (Rne) and regulating its endonucleolytic activity. Can modulate Rne action in a substrate-dependent manner by altering the composition of the degradosome. Modulates RNA-binding and helicase activities of the degradosome. This chain is Regulator of ribonuclease activity A, found in Glaesserella parasuis serovar 5 (strain SH0165) (Haemophilus parasuis).